The primary structure comprises 215 residues: Large ribosomal subunit protein uL4 (215 aa).

Positions 46 to 72 (TAKSKNRAEVSGGGRKPWAQKGGGRAR) are disordered. Over residues 56 to 71 (SGGGRKPWAQKGGGRA) the composition is skewed to gly residues.

The protein belongs to the universal ribosomal protein uL4 family. In terms of assembly, part of the 50S ribosomal subunit.

Functionally, one of the primary rRNA binding proteins, this protein initially binds near the 5'-end of the 23S rRNA. It is important during the early stages of 50S assembly. It makes multiple contacts with different domains of the 23S rRNA in the assembled 50S subunit and ribosome. In terms of biological role, forms part of the polypeptide exit tunnel. The protein is Large ribosomal subunit protein uL4 of Helicobacter pylori (strain J99 / ATCC 700824) (Campylobacter pylori J99).